The sequence spans 290 residues: MGRQKELVTRCGEMLHIRYRLLRQALAECLGTLILVMFGCGSVAQVVLSRGTHGGFLTINLAFGFAVTLGILVAGQVSGAHLNPAVTFAMCFLAREPWIKLPVYTLAQTLGAFLGAGIIFGLYYDAIWAFANNQLIVSGPNGTAGIFATYPSGHLDMVNGFFDQFIGTASLIVCVLAIVDPNNNPVPRGLEAFTVGLVVLVIGTSMGFNSGYAVNPARDFGPRLFTAIAGWGSEVFTTGRHWWWVPIASPLLGSIAGVFVYQLMIGCHLEPPPPSTDEENVKLSQVKHKE.

The Cytoplasmic segment spans residues 1–24 (MGRQKELVTRCGEMLHIRYRLLRQ). A helical membrane pass occupies residues 25-42 (ALAECLGTLILVMFGCGS). Topologically, residues 43–56 (VAQVVLSRGTHGGF) are extracellular. A helical transmembrane segment spans residues 57–74 (LTINLAFGFAVTLGILVA). Residues 75-78 (GQVS) are Cytoplasmic-facing. Positions 79–92 (GAHLNPAVTFAMCF) form an intramembrane region, discontinuously helical. Positions 83–85 (NPA) match the NPA 1 motif. At 93-100 (LAREPWIK) the chain is on the cytoplasmic side. Residues 101 to 121 (LPVYTLAQTLGAFLGAGIIFG) form a helical membrane-spanning segment. Residues 122-159 (LYYDAIWAFANNQLIVSGPNGTAGIFATYPSGHLDMVN) are Extracellular-facing. N141 is a glycosylation site (N-linked (GlcNAc...) asparagine). A helical transmembrane segment spans residues 160–177 (GFFDQFIGTASLIVCVLA). Residues 178-189 (IVDPNNNPVPRG) are Cytoplasmic-facing. The helical transmembrane segment at 190–206 (LEAFTVGLVVLVIGTSM) threads the bilayer. Over 207-210 (GFNS) the chain is Extracellular. Positions 211–224 (GYAVNPARDFGPRL) form an intramembrane region, discontinuously helical. The NPA 2 motif lies at 215-217 (NPA). The Extracellular segment spans residues 225–242 (FTAIAGWGSEVFTTGRHW). A helical transmembrane segment spans residues 243-264 (WWVPIASPLLGSIAGVFVYQLM). At 265-290 (IGCHLEPPPPSTDEENVKLSQVKHKE) the chain is on the cytoplasmic side.

Belongs to the MIP/aquaporin (TC 1.A.8) family. Homotetramer; each monomer provides an independent glycerol/water pore. Could also exist in other oligomeric states. Highly expressed in stomach and spleen, with lower expression in kidney and lung.

It is found in the cell membrane. It localises to the basolateral cell membrane. The catalysed reaction is glycerol(in) = glycerol(out). It catalyses the reaction H2O(in) = H2O(out). It carries out the reaction urea(in) = urea(out). The enzyme catalyses H2O2(out) = H2O2(in). Its function is as follows. Aquaglyceroporins form homotetrameric transmembrane channels, with each monomer independently mediating glycerol and water transport across the plasma membrane along their osmotic gradient. Could also be permeable to urea. Also participates in cell permeability to H2O2 and H2O2-mediated signaling. In skin, transports glycerol to the epidermis and stratum corneum, where it maintains hydration, elasticity, and supports lipid biosynthesis for barrier repair. In kidney, contributes to the reabsorption of water, helping the body maintain proper fluid balance. This is Aquaporin-3 from Sus scrofa (Pig).